The primary structure comprises 261 residues: Short-chain dehydrogenase/reductase AFUA_1G00990 (261 aa).

Residues leucine 19, aspartate 67, asparagine 94, tyrosine 169, lysine 173, and threonine 213 each contribute to the NADP(+) site. Catalysis depends on tyrosine 169, which acts as the Proton donor. Lysine 173 serves as the catalytic Lowers pKa of active site Tyr.

Belongs to the short-chain dehydrogenases/reductases (SDR) family.

Functionally, short-chain dehydrogenase/reductase; part of the gene cluster that mediates the biosynthesis of fumigermin that inhibits germination of spores of the inducing S.rapamycinicus, and thus helps the fungus to defend resources in the shared habitat against a bacterial competitor. The partially reducing polyketide synthase fngA alone is sufficient for the production of fumigermin. FgnA catalyzes the condensation of 3 malonyl-CoA units to an acetyl-CoA starter, and 3 methylations to yield fumigermin. It is remarkable that the five cluster genes including fgnA are conserved in distantly related fungi, supporting the assumption of a fumigermin cluster; it is thus possible that originally all five genes were functional, but that the genes encoding tailoring enzymes became inactive from mutations, similar to the case of the fgnA gene in strains A1163 and Af293. The sequence is that of Short-chain dehydrogenase/reductase AFUA_1G00990 from Aspergillus fumigatus (strain ATCC MYA-4609 / CBS 101355 / FGSC A1100 / Af293) (Neosartorya fumigata).